Here is a 125-residue protein sequence, read N- to C-terminus: Small ribosomal subunit protein bS6 (125 aa).

The segment at 94–125 is disordered; sequence KAETGASSMMKTVEREEARKASQAEFAASNER. A compositionally biased stretch (basic and acidic residues) spans 105–115; sequence TVEREEARKAS.

This sequence belongs to the bacterial ribosomal protein bS6 family.

Functionally, binds together with bS18 to 16S ribosomal RNA. In Acidovorax ebreus (strain TPSY) (Diaphorobacter sp. (strain TPSY)), this protein is Small ribosomal subunit protein bS6.